The following is a 286-amino-acid chain: Pyridoxal kinase PdxY (286 aa).

Substrate contacts are provided by residues Ser9 and 44–45 (TQ). ATP-binding positions include Asp111, Ala143, Glu148, Lys181, and 208–211 (RPLV). Position 222 (Asp222) interacts with substrate.

The protein belongs to the pyridoxine kinase family. PdxY subfamily. As to quaternary structure, homodimer. The cofactor is Mg(2+).

It catalyses the reaction pyridoxal + ATP = pyridoxal 5'-phosphate + ADP + H(+). The protein operates within cofactor metabolism; pyridoxal 5'-phosphate salvage; pyridoxal 5'-phosphate from pyridoxal: step 1/1. In terms of biological role, pyridoxal kinase involved in the salvage pathway of pyridoxal 5'-phosphate (PLP). Catalyzes the phosphorylation of pyridoxal to PLP. This is Pyridoxal kinase PdxY from Pectobacterium atrosepticum (strain SCRI 1043 / ATCC BAA-672) (Erwinia carotovora subsp. atroseptica).